Consider the following 86-residue polypeptide: Large ribosomal subunit protein bL27 (86 aa).

It belongs to the bacterial ribosomal protein bL27 family.

In Flavobacterium psychrophilum (strain ATCC 49511 / DSM 21280 / CIP 103535 / JIP02/86), this protein is Large ribosomal subunit protein bL27.